Here is a 625-residue protein sequence, read N- to C-terminus: Inactive glucose-6-phosphate 1-dehydrogenase 4, chloroplastic (625 aa).

The transit peptide at 1-49 (MSLSSCLLPFSQSATAPSSSVCSCHLAASFSNFPVSSRDYSFSRSGSLV) directs the protein to the chloroplast. NADP(+) is bound by residues 160–167 (GATGELAR) and Arg194. A disulfide bond links Cys212 and Cys220. Lys297 is a binding site for NADP(+). Residues Lys297, 327–331 (HMLGR), Glu365, and Asp382 each bind D-glucose 6-phosphate. His387 functions as the Proton acceptor in the catalytic mechanism. The NADP(+) site is built by Arg471, Arg480, Arg513, and Arg606.

This sequence belongs to the glucose-6-phosphate dehydrogenase family. As to quaternary structure, forms homodimer. Interacts with G6PD1. Expressed in leaves, stems and buds.

Its subcellular location is the plastid. It localises to the chloroplast stroma. Functionally, seems to be a catalytically inactive enzyme. The polypeptide is Inactive glucose-6-phosphate 1-dehydrogenase 4, chloroplastic (Arabidopsis thaliana (Mouse-ear cress)).